The chain runs to 616 residues: Dihydroxy-acid dehydratase (616 aa).

Residue D81 participates in Mg(2+) binding. C122 provides a ligand contact to [2Fe-2S] cluster. The Mg(2+) site is built by D123 and K124. At K124 the chain carries N6-carboxylysine. C195 contributes to the [2Fe-2S] cluster binding site. E491 provides a ligand contact to Mg(2+). Residue S517 is the Proton acceptor of the active site.

This sequence belongs to the IlvD/Edd family. As to quaternary structure, homodimer. [2Fe-2S] cluster serves as cofactor. Mg(2+) is required as a cofactor.

The enzyme catalyses (2R)-2,3-dihydroxy-3-methylbutanoate = 3-methyl-2-oxobutanoate + H2O. It catalyses the reaction (2R,3R)-2,3-dihydroxy-3-methylpentanoate = (S)-3-methyl-2-oxopentanoate + H2O. It functions in the pathway amino-acid biosynthesis; L-isoleucine biosynthesis; L-isoleucine from 2-oxobutanoate: step 3/4. The protein operates within amino-acid biosynthesis; L-valine biosynthesis; L-valine from pyruvate: step 3/4. Functionally, functions in the biosynthesis of branched-chain amino acids. Catalyzes the dehydration of (2R,3R)-2,3-dihydroxy-3-methylpentanoate (2,3-dihydroxy-3-methylvalerate) into 2-oxo-3-methylpentanoate (2-oxo-3-methylvalerate) and of (2R)-2,3-dihydroxy-3-methylbutanoate (2,3-dihydroxyisovalerate) into 2-oxo-3-methylbutanoate (2-oxoisovalerate), the penultimate precursor to L-isoleucine and L-valine, respectively. This is Dihydroxy-acid dehydratase from Escherichia coli O81 (strain ED1a).